Reading from the N-terminus, the 273-residue chain is 4-diphosphocytidyl-2-C-methyl-D-erythritol kinase (273 aa).

Residue lysine 12 is part of the active site. 90-100 (PVASGIGGGSA) serves as a coordination point for ATP. Aspartate 122 is a catalytic residue.

The protein belongs to the GHMP kinase family. IspE subfamily.

It catalyses the reaction 4-CDP-2-C-methyl-D-erythritol + ATP = 4-CDP-2-C-methyl-D-erythritol 2-phosphate + ADP + H(+). Its pathway is isoprenoid biosynthesis; isopentenyl diphosphate biosynthesis via DXP pathway; isopentenyl diphosphate from 1-deoxy-D-xylulose 5-phosphate: step 3/6. Its function is as follows. Catalyzes the phosphorylation of the position 2 hydroxy group of 4-diphosphocytidyl-2C-methyl-D-erythritol. The sequence is that of 4-diphosphocytidyl-2-C-methyl-D-erythritol kinase from Paracoccus denitrificans (strain Pd 1222).